The following is a 183-amino-acid chain: uncharacterized protein (183 aa).

Belongs to the herpesviridae US1 family.

This is an uncharacterized protein from Human cytomegalovirus (strain AD169) (HHV-5).